Here is a 439-residue protein sequence, read N- to C-terminus: Mitochondrial distribution and morphology protein 12 (439 aa).

One can recognise an SMP-LTD domain in the interval 1 to 439; it reads MSIDVNWRFA…VYPSFWTFLI (439 aa). Disordered regions lie at residues 70–103, 185–274, and 354–386; these read YEED…LNEP, GWSD…PPRM, and PEQQ…RHGG. Positions 78–91 are enriched in basic and acidic residues; the sequence is TSDASEERGEEHSS. Residues 215–245 show a composition bias toward polar residues; it reads DTSNSTSRPSTANTLPSHPSGSSKNSGQAAT. Composition is skewed to basic and acidic residues over residues 247–261 and 362–371; these read RNDH…HLED and SAGDDHRPQS.

This sequence belongs to the MDM12 family. Component of the ER-mitochondria encounter structure (ERMES) or MDM complex, composed of mmm1, mdm10, mdm12 and mdm34. A mmm1 homodimer associates with one molecule of mdm12 on each side in a pairwise head-to-tail manner, and the SMP-LTD domains of mmm1 and mdm12 generate a continuous hydrophobic tunnel for phospholipid trafficking.

It is found in the mitochondrion outer membrane. It localises to the endoplasmic reticulum membrane. Functionally, component of the ERMES/MDM complex, which serves as a molecular tether to connect the endoplasmic reticulum (ER) and mitochondria. Components of this complex are involved in the control of mitochondrial shape and protein biogenesis, and function in nonvesicular lipid trafficking between the ER and mitochondria. Mdm12 is required for the interaction of the ER-resident membrane protein mmm1 and the outer mitochondrial membrane-resident beta-barrel protein mdm10. The mdm12-mmm1 subcomplex functions in the major beta-barrel assembly pathway that is responsible for biogenesis of all mitochondrial outer membrane beta-barrel proteins, and acts in a late step after the SAM complex. The mdm10-mdm12-mmm1 subcomplex further acts in the TOM40-specific pathway after the action of the mdm12-mmm1 complex. Essential for establishing and maintaining the structure of mitochondria and maintenance of mtDNA nucleoids. The chain is Mitochondrial distribution and morphology protein 12 from Aspergillus fumigatus (strain CBS 144.89 / FGSC A1163 / CEA10) (Neosartorya fumigata).